We begin with the raw amino-acid sequence, 362 residues long: MAKEKIEIVVANDDTRIEKVDQVLPPIALLEKYPASEQAAALVKQTRHEAHNIIHGKDDRLLVVIGPCSIHDPKAAIEYATRLKPLREKYKDSLEIIMRVYFEKPRTTVGWKGLINEPYLNDTYRLNDGLRIARKLLSDINDLGVPAAGEFLDMITPQYLADFMSWGAIGARTTESQVHRELASGLSCAVGFKNATNGGVKVALDAIGAAEAPHYFLSVTKFGHSAIVSTKGNEDCHIILRGGDKGPNYSAEDVEKVCADIEKTGRIPHVMVDFSHANSSKQYKKQMDVCQDVCNQIAFGSKQIFGVMVESHLVEGRQDLVDGKAQTYGQSITDACIGWEDSERLLQQLSDAVIARRKATSN.

This sequence belongs to the class-I DAHP synthase family.

The catalysed reaction is D-erythrose 4-phosphate + phosphoenolpyruvate + H2O = 7-phospho-2-dehydro-3-deoxy-D-arabino-heptonate + phosphate. Its pathway is metabolic intermediate biosynthesis; chorismate biosynthesis; chorismate from D-erythrose 4-phosphate and phosphoenolpyruvate: step 1/7. Functionally, stereospecific condensation of phosphoenolpyruvate (PEP) and D-erythrose-4-phosphate (E4P) giving rise to 3-deoxy-D-arabino-heptulosonate-7-phosphate (DAHP). This Haemophilus influenzae (strain ATCC 51907 / DSM 11121 / KW20 / Rd) protein is Phospho-2-dehydro-3-deoxyheptonate aldolase (aroG).